Consider the following 542-residue polypeptide: Sensor protein CitS (542 aa).

Topologically, residues M1 to K13 are cytoplasmic. The chain crosses the membrane as a helical span at residues I14 to A34. The Extracellular segment spans residues V35–R175. Residues N176–A196 form a helical membrane-spanning segment. At K197–G542 the chain is on the cytoplasmic side. One can recognise a PAS domain in the interval R216–L279. Positions A336–K528 constitute a Histidine kinase domain. H339 is modified (phosphohistidine; by autocatalysis).

The protein resides in the cell membrane. It catalyses the reaction ATP + protein L-histidine = ADP + protein N-phospho-L-histidine.. Its function is as follows. Member of the two-component regulatory system CitT/CitS. Regulates the expression of the citM-yflN operon. Functions probably as a membrane-associated protein kinase that phosphorylates CitT in response to environmental citrate or Mg(2+)-citrate complex. The polypeptide is Sensor protein CitS (citS) (Bacillus subtilis (strain 168)).